The primary structure comprises 390 residues: Succinate--CoA ligase [ADP-forming] subunit beta (390 aa).

One can recognise an ATP-grasp domain in the interval 9–245; sequence KELLSRYGLP…KSQENEREVK (237 aa). Residues Lys-46, 53–55, Glu-100, Tyr-103, and Glu-108 each bind ATP; that span reads GRG. Positions 200 and 214 each coordinate Mg(2+). Substrate is bound by residues Asn-265 and 322–324; that span reads GIV.

It belongs to the succinate/malate CoA ligase beta subunit family. In terms of assembly, heterotetramer of two alpha and two beta subunits. Mg(2+) is required as a cofactor.

The catalysed reaction is succinate + ATP + CoA = succinyl-CoA + ADP + phosphate. It carries out the reaction GTP + succinate + CoA = succinyl-CoA + GDP + phosphate. The protein operates within carbohydrate metabolism; tricarboxylic acid cycle; succinate from succinyl-CoA (ligase route): step 1/1. Succinyl-CoA synthetase functions in the citric acid cycle (TCA), coupling the hydrolysis of succinyl-CoA to the synthesis of either ATP or GTP and thus represents the only step of substrate-level phosphorylation in the TCA. The beta subunit provides nucleotide specificity of the enzyme and binds the substrate succinate, while the binding sites for coenzyme A and phosphate are found in the alpha subunit. In Chromobacterium violaceum (strain ATCC 12472 / DSM 30191 / JCM 1249 / CCUG 213 / NBRC 12614 / NCIMB 9131 / NCTC 9757 / MK), this protein is Succinate--CoA ligase [ADP-forming] subunit beta.